Here is a 234-residue protein sequence, read N- to C-terminus: Large ribosomal subunit protein uL1 (234 aa).

Belongs to the universal ribosomal protein uL1 family. In terms of assembly, part of the 50S ribosomal subunit.

Binds directly to 23S rRNA. The L1 stalk is quite mobile in the ribosome, and is involved in E site tRNA release. Its function is as follows. Protein L1 is also a translational repressor protein, it controls the translation of the L11 operon by binding to its mRNA. The sequence is that of Large ribosomal subunit protein uL1 from Aliivibrio fischeri (strain MJ11) (Vibrio fischeri).